A 220-amino-acid polypeptide reads, in one-letter code: MFLRRTKAQLISPEEALPGRPVATPVTEPHEVLGTPLTGPFPEGTAVAVFGMGCFWGAERLFWTLPGVLTTSVGYAGGYTPNPSYDEVCSGRTGHAEVVHVRYDPTKITYEDLLKVFWENHDPTQGMRQGNDVGTQYRSAIYPTTDEQLTTARASRDAFAPVVARAGKGEITTEISPLGDYYLAEGYHQQYLAPTKNPGGYCNHGPNGLSCPVGVARTTD.

Residue C54 is part of the active site.

Belongs to the MsrA Met sulfoxide reductase family.

It carries out the reaction L-methionyl-[protein] + [thioredoxin]-disulfide + H2O = L-methionyl-(S)-S-oxide-[protein] + [thioredoxin]-dithiol. It catalyses the reaction [thioredoxin]-disulfide + L-methionine + H2O = L-methionine (S)-S-oxide + [thioredoxin]-dithiol. In terms of biological role, has an important function as a repair enzyme for proteins that have been inactivated by oxidation. Catalyzes the reversible oxidation-reduction of methionine sulfoxide in proteins to methionine. The polypeptide is Peptide methionine sulfoxide reductase MsrA (Salinispora tropica (strain ATCC BAA-916 / DSM 44818 / JCM 13857 / NBRC 105044 / CNB-440)).